We begin with the raw amino-acid sequence, 213 residues long: Orotate phosphoribosyltransferase (213 aa).

Lysine 26 contributes to the 5-phospho-alpha-D-ribose 1-diphosphate binding site. Position 34 to 35 (34 to 35 (FF)) interacts with orotate. Residues 72–73 (YK), arginine 99, lysine 100, lysine 103, histidine 105, and 124–132 (DDVITAGTA) contribute to the 5-phospho-alpha-D-ribose 1-diphosphate site. Positions 128 and 156 each coordinate orotate.

It belongs to the purine/pyrimidine phosphoribosyltransferase family. PyrE subfamily. In terms of assembly, homodimer. Requires Mg(2+) as cofactor.

It carries out the reaction orotidine 5'-phosphate + diphosphate = orotate + 5-phospho-alpha-D-ribose 1-diphosphate. It participates in pyrimidine metabolism; UMP biosynthesis via de novo pathway; UMP from orotate: step 1/2. Catalyzes the transfer of a ribosyl phosphate group from 5-phosphoribose 1-diphosphate to orotate, leading to the formation of orotidine monophosphate (OMP). In Shigella sonnei (strain Ss046), this protein is Orotate phosphoribosyltransferase.